The sequence spans 254 residues: 3-dehydroquinate dehydratase (254 aa).

3-dehydroquinate is bound by residues 47–49 and R83; that span reads EWR. H144 serves as the catalytic Proton donor/acceptor. The active-site Schiff-base intermediate with substrate is K171. Positions 214, 233, and 237 each coordinate 3-dehydroquinate.

It belongs to the type-I 3-dehydroquinase family. Homodimer.

The enzyme catalyses 3-dehydroquinate = 3-dehydroshikimate + H2O. Its pathway is metabolic intermediate biosynthesis; chorismate biosynthesis; chorismate from D-erythrose 4-phosphate and phosphoenolpyruvate: step 3/7. Involved in the third step of the chorismate pathway, which leads to the biosynthesis of aromatic amino acids. Catalyzes the cis-dehydration of 3-dehydroquinate (DHQ) and introduces the first double bond of the aromatic ring to yield 3-dehydroshikimate. This Clostridium botulinum (strain Eklund 17B / Type B) protein is 3-dehydroquinate dehydratase.